Reading from the N-terminus, the 557-residue chain is MKEEEQRTAMSFIDTTIKMRKEANAKKVVLAWGLLNVSLAGMIYTEMTGKMISTYYNITYWPLWYIELALASLFSLNALFDFWRYFKYTMTSPNITLSPSQQKLLGVPYSSAQSSPPRDLITNKVPASTPSPSMQGQNVLSYSPSRSPSSSPKFSPSCISGYSPQIQAMLPSSGSPFTSVVSYSSNSFPKITSYSSSPGSSQYPSNLGPVEGGLRSRYRSSPSTYSSPTDKEDYMTDLKLLDTFLRSEEEKQHRVQLGSPDSSSTAASPTFWNYSRSVGDYAHTLRKFQYQLACRSQAPSAHKDEADLGSKHAAEEVWGKVTMNRQLLDHMDAWTAKFRNWVNETILVPLVHEVDSVNTQMRRLGCPELQIGESSISSLKQAALVKAPLIPTLHIIVQYLDITPNQEYLYERLKELSHGGCMSSFRWNSGGDFKGRKWDTDLPTDSAIVMHIFCTYLDSRLPPHPKYPDGKTFTSQHFVQTPDKPDTSNENVFCIHQSNVNPPYYELVYQKHITBRNNLFHTLLMFLYIIKTKESGMLGRVNLGLSGVNILWIFGDH.

The chain crosses the membrane as a helical span at residues 28–48 (VVLAWGLLNVSLAGMIYTEMT). Asparagine 57 carries N-linked (GlcNAc...) asparagine glycosylation. A helical transmembrane segment spans residues 60–80 (YWPLWYIELALASLFSLNALF). Disordered stretches follow at residues 108–156 (PYSS…KFSP) and 194–232 (YSSS…TDKE). Residues 125–140 (VPASTPSPSMQGQNVL) show a composition bias toward polar residues. Composition is skewed to low complexity over residues 141 to 156 (SYSP…KFSP), 194 to 205 (YSSSPGSSQYPS), and 219 to 228 (RSSPSTYSSP). Asparagine 273 and asparagine 343 each carry an N-linked (GlcNAc...) asparagine glycan.

The protein localises to the membrane. It is found in the nucleus envelope. Its subcellular location is the golgi apparatus. The protein resides in the cytoplasm. The polypeptide is Transmembrane protein 209 (tmem209) (Xenopus tropicalis (Western clawed frog)).